Here is a 1155-residue protein sequence, read N- to C-terminus: DNA-directed RNA polymerase subunit beta (1155 aa).

This sequence belongs to the RNA polymerase beta chain family. As to quaternary structure, the RNAP catalytic core consists of 2 alpha, 1 beta, 1 beta' and 1 omega subunit. When a sigma factor is associated with the core the holoenzyme is formed, which can initiate transcription.

It catalyses the reaction RNA(n) + a ribonucleoside 5'-triphosphate = RNA(n+1) + diphosphate. Functionally, DNA-dependent RNA polymerase catalyzes the transcription of DNA into RNA using the four ribonucleoside triphosphates as substrates. This is DNA-directed RNA polymerase subunit beta from Borrelia duttonii (strain Ly).